The primary structure comprises 344 residues: tRNA N6-adenosine threonylcarbamoyltransferase (344 aa).

Fe cation contacts are provided by H111 and H115. Residues 134-138, D167, G180, and N273 each bind substrate; that span reads LVSGG. D301 contributes to the Fe cation binding site.

It belongs to the KAE1 / TsaD family. The cofactor is Fe(2+).

Its subcellular location is the cytoplasm. The enzyme catalyses L-threonylcarbamoyladenylate + adenosine(37) in tRNA = N(6)-L-threonylcarbamoyladenosine(37) in tRNA + AMP + H(+). Its function is as follows. Required for the formation of a threonylcarbamoyl group on adenosine at position 37 (t(6)A37) in tRNAs that read codons beginning with adenine. Is involved in the transfer of the threonylcarbamoyl moiety of threonylcarbamoyl-AMP (TC-AMP) to the N6 group of A37, together with TsaE and TsaB. TsaD likely plays a direct catalytic role in this reaction. This Cupriavidus necator (strain ATCC 17699 / DSM 428 / KCTC 22496 / NCIMB 10442 / H16 / Stanier 337) (Ralstonia eutropha) protein is tRNA N6-adenosine threonylcarbamoyltransferase.